Consider the following 314-residue polypeptide: Homoserine O-acetyltransferase (314 aa).

Catalysis depends on Cys142, which acts as the Acyl-thioester intermediate. 2 residues coordinate substrate: Lys163 and Ser192. His235 serves as the catalytic Proton acceptor. The active site involves Glu237. Arg249 contributes to the substrate binding site.

Belongs to the MetA family.

The protein resides in the cytoplasm. The catalysed reaction is L-homoserine + acetyl-CoA = O-acetyl-L-homoserine + CoA. It functions in the pathway amino-acid biosynthesis; L-methionine biosynthesis via de novo pathway; O-acetyl-L-homoserine from L-homoserine: step 1/1. In terms of biological role, transfers an acetyl group from acetyl-CoA to L-homoserine, forming acetyl-L-homoserine. This Streptococcus pneumoniae serotype 4 (strain ATCC BAA-334 / TIGR4) protein is Homoserine O-acetyltransferase.